We begin with the raw amino-acid sequence, 302 residues long: Sulfate adenylyltransferase subunit 2 (302 aa).

It belongs to the PAPS reductase family. CysD subfamily. Heterodimer composed of CysD, the smaller subunit, and CysN.

The catalysed reaction is sulfate + ATP + H(+) = adenosine 5'-phosphosulfate + diphosphate. It functions in the pathway sulfur metabolism; hydrogen sulfide biosynthesis; sulfite from sulfate: step 1/3. Functionally, with CysN forms the ATP sulfurylase (ATPS) that catalyzes the adenylation of sulfate producing adenosine 5'-phosphosulfate (APS) and diphosphate, the first enzymatic step in sulfur assimilation pathway. APS synthesis involves the formation of a high-energy phosphoric-sulfuric acid anhydride bond driven by GTP hydrolysis by CysN coupled to ATP hydrolysis by CysD. The chain is Sulfate adenylyltransferase subunit 2 from Photorhabdus laumondii subsp. laumondii (strain DSM 15139 / CIP 105565 / TT01) (Photorhabdus luminescens subsp. laumondii).